Here is a 109-residue protein sequence, read N- to C-terminus: Putative membrane protein insertion efficiency factor (109 aa).

It belongs to the UPF0161 family.

It localises to the cell inner membrane. Its function is as follows. Could be involved in insertion of integral membrane proteins into the membrane. The chain is Putative membrane protein insertion efficiency factor from Rhodopseudomonas palustris (strain BisA53).